The sequence spans 51 residues: MARYRCCRSQSRSRCCRPRRRCRRRRRRSCRARRRATRCCRRRYRLRSRRY.

The protein belongs to the protamine P1 family. In terms of tissue distribution, testis.

Its subcellular location is the nucleus. The protein localises to the chromosome. Functionally, protamines substitute for histones in the chromatin of sperm during the haploid phase of spermatogenesis. They compact sperm DNA into a highly condensed, stable and inactive complex. This is Sperm protamine P1 (PRM1) from Trachypithecus cristatus (Silvered leaf-monkey).